Consider the following 557-residue polypeptide: MAYNRRSKHITQGVARSPNRSMYYALGYQKDDFDKPMVGIANGHSTITPCNSGLQRLSDAAVAAVKAADANPQIFGTPTISDGMSMGTEGMKYSLVSREVIADCIETCVQGQWMDGVVVVGGCDKNMPGGMIALARLNVPGIYVYGGTIRPGNWKGRDLTIVSSFEAVGEFTAGRMSQEDFEGVERNACPTSGSCGGMYTANTMSSSFEALGMSLLYSSTMANPDQEKVDSAAESARVLVEAVKRDLKPRDIITKESIENAVSVIMATGGSTNAVLHYLAIAHAAEVDWTIEDFERIRKRVPVICDLKPSGKYVATDLHRAGGIPQVLKILLDAGLLHGDCMTITGRTIADELKDVPSVPRADQDVIFPIDRALYKEGHLAILKGNLAEDGAVAKITGLKNPVITGPARVFDDEQSAMDAILGDRIRAGDILVLRYLGPKGGPGMPEMLAPTSAIIGKGLGESVGFITDGRFSGGTWGMVVGHVAPEAFVGGTIALVQEGDSITIDAHRLLLQLNVDDAELARRRAAWQQPAPRYTRGVLAKFAALARPANQGAVTG.

Cys-50 contacts [2Fe-2S] cluster. Asp-82 is a Mg(2+) binding site. Residue Cys-123 participates in [2Fe-2S] cluster binding. Residues Asp-124 and Lys-125 each contribute to the Mg(2+) site. At Lys-125 the chain carries N6-carboxylysine. Cys-195 contacts [2Fe-2S] cluster. Glu-447 is a binding site for Mg(2+). Ser-473 acts as the Proton acceptor in catalysis.

It belongs to the IlvD/Edd family. In terms of assembly, homodimer. Requires [2Fe-2S] cluster as cofactor. It depends on Mg(2+) as a cofactor.

The enzyme catalyses (2R)-2,3-dihydroxy-3-methylbutanoate = 3-methyl-2-oxobutanoate + H2O. It carries out the reaction (2R,3R)-2,3-dihydroxy-3-methylpentanoate = (S)-3-methyl-2-oxopentanoate + H2O. It participates in amino-acid biosynthesis; L-isoleucine biosynthesis; L-isoleucine from 2-oxobutanoate: step 3/4. Its pathway is amino-acid biosynthesis; L-valine biosynthesis; L-valine from pyruvate: step 3/4. Functions in the biosynthesis of branched-chain amino acids. Catalyzes the dehydration of (2R,3R)-2,3-dihydroxy-3-methylpentanoate (2,3-dihydroxy-3-methylvalerate) into 2-oxo-3-methylpentanoate (2-oxo-3-methylvalerate) and of (2R)-2,3-dihydroxy-3-methylbutanoate (2,3-dihydroxyisovalerate) into 2-oxo-3-methylbutanoate (2-oxoisovalerate), the penultimate precursor to L-isoleucine and L-valine, respectively. The polypeptide is Dihydroxy-acid dehydratase 2 (Burkholderia lata (strain ATCC 17760 / DSM 23089 / LMG 22485 / NCIMB 9086 / R18194 / 383)).